The following is a 207-amino-acid chain: Large ribosomal subunit protein bL25 (207 aa).

Belongs to the bacterial ribosomal protein bL25 family. CTC subfamily. Part of the 50S ribosomal subunit; part of the 5S rRNA/L5/L18/L25 subcomplex. Contacts the 5S rRNA. Binds to the 5S rRNA independently of L5 and L18.

In terms of biological role, this is one of the proteins that binds to the 5S RNA in the ribosome where it forms part of the central protuberance. The polypeptide is Large ribosomal subunit protein bL25 (Azorhizobium caulinodans (strain ATCC 43989 / DSM 5975 / JCM 20966 / LMG 6465 / NBRC 14845 / NCIMB 13405 / ORS 571)).